We begin with the raw amino-acid sequence, 388 residues long: Mitochondrial distribution and morphology protein 12 (388 aa).

The SMP-LTD domain maps to 1–388 (MSLDINWSLL…VFPNFHTVAL (388 aa)). Disordered stretches follow at residues 75 to 101 (DDEG…RNEA) and 209 to 249 (PMSI…KVSS). A compositionally biased stretch (basic and acidic residues) spans 83 to 101 (EEKQREKEREERDKLRNEA). The segment covering 234-243 (PSPPAHPAGL) has biased composition (pro residues).

Belongs to the MDM12 family. Component of the ER-mitochondria encounter structure (ERMES) or MDM complex, composed of MMM1, MDM10, MDM12 and MDM34. An MMM1 homodimer associates with one molecule of MDM12 on each side in a pairwise head-to-tail manner, and the SMP-LTD domains of MMM1 and MDM12 generate a continuous hydrophobic tunnel for phospholipid trafficking.

It localises to the mitochondrion outer membrane. Its subcellular location is the endoplasmic reticulum membrane. In terms of biological role, component of the ERMES/MDM complex, which serves as a molecular tether to connect the endoplasmic reticulum (ER) and mitochondria. Components of this complex are involved in the control of mitochondrial shape and protein biogenesis, and function in nonvesicular lipid trafficking between the ER and mitochondria. MDM12 is required for the interaction of the ER-resident membrane protein MMM1 and the outer mitochondrial membrane-resident beta-barrel protein MDM10. The MDM12-MMM1 subcomplex functions in the major beta-barrel assembly pathway that is responsible for biogenesis of all mitochondrial outer membrane beta-barrel proteins, and acts in a late step after the SAM complex. The MDM10-MDM12-MMM1 subcomplex further acts in the TOM40-specific pathway after the action of the MDM12-MMM1 complex. Essential for establishing and maintaining the structure of mitochondria and maintenance of mtDNA nucleoids. In Cryptococcus neoformans var. neoformans serotype D (strain JEC21 / ATCC MYA-565) (Filobasidiella neoformans), this protein is Mitochondrial distribution and morphology protein 12.